A 245-amino-acid chain; its full sequence is 1-(5-phosphoribosyl)-5-[(5-phosphoribosylamino)methylideneamino] imidazole-4-carboxamide isomerase (245 aa).

Aspartate 8 functions as the Proton acceptor in the catalytic mechanism. Residue aspartate 131 is the Proton donor of the active site.

Belongs to the HisA/HisF family.

The protein resides in the cytoplasm. The enzyme catalyses 1-(5-phospho-beta-D-ribosyl)-5-[(5-phospho-beta-D-ribosylamino)methylideneamino]imidazole-4-carboxamide = 5-[(5-phospho-1-deoxy-D-ribulos-1-ylimino)methylamino]-1-(5-phospho-beta-D-ribosyl)imidazole-4-carboxamide. It participates in amino-acid biosynthesis; L-histidine biosynthesis; L-histidine from 5-phospho-alpha-D-ribose 1-diphosphate: step 4/9. The protein is 1-(5-phosphoribosyl)-5-[(5-phosphoribosylamino)methylideneamino] imidazole-4-carboxamide isomerase of Neisseria meningitidis serogroup C / serotype 2a (strain ATCC 700532 / DSM 15464 / FAM18).